Here is a 242-residue protein sequence, read N- to C-terminus: Terpene cyclase cle7 (242 aa).

Transmembrane regions (helical) follow at residues 20–40 (LLLT…ITTI), 50–69 (GVSL…FAIL), 79–101 (VILR…FARS), 117–137 (LFVL…SVLL), 143–163 (FYWS…GILV), 172–192 (SYGM…SLFL), and 207–227 (ILMR…GVCF).

Belongs to the paxB family.

The protein resides in the membrane. Its pathway is secondary metabolite biosynthesis; terpenoid biosynthesis. In terms of biological role, non-reducing polyketide synthase; part of the cluster A that mediates the biosynthesis of chevalone E and its oxidized derivatives that possess a unique five-membered lactone ring and can synergistically enhance the cytotoxicity of doxorubicin (DOX) in breast cancer cells. Within the pathway, cle7 takes part to the biosynthesis of the molecular scaffold by catalyzing the cyclization of the prenyl group initiated by protonation and ring-opening of the epoxide to produce the chevalone E intermediate. The molecular scaffold is commonly biosynthesized by a series of enzymes including the non-reducing polyketide synthase (NR-PKS) cle1 that produces the alpha-pyrone triacetic acid lactone (TAL); The membrane-bound prenyltransferase cle5 that accepts TAL as its substrate to perform a C-3 geranylgeranylation reaction, in which the pathway-dedicated GGPS cle6 is required to provide GGPP, the other substrate of cle5; the FAD-dependent monooxygenase Cle3 that forms an (S)-epoxide ring at the terminal olefin of the geranylgeranyl group; and the terpene cyclase Cle7 that catalyzes the cyclization of the prenyl group that yields the pentacyclic pathway intermediate chevalone E. Chevalone E can derivatize into seven new oxidized analogs by the cytochrome P450 monooxygenases cle2 (acting at C-20) and cle4 (acting at C-11 and C-12). The polypeptide is Terpene cyclase cle7 (Aspergillus versicolor).